The chain runs to 329 residues: Biotin--protein ligase 2 (329 aa).

In terms of domain architecture, BPL/LPL catalytic spans 67 to 251; the sequence is ISTHRFGRFL…KFENFFDLFM (185 aa). Residues 84–85, Gln107, 111–113, and Lys182 each bind biotin; these read ST and RGR.

The protein belongs to the biotin--protein ligase family. Highly expressed in seeds. Expressed in roots, leaves, stems, flowers and siliques.

The protein localises to the cytoplasm. In terms of biological role, seems to have no or limited implication in biotin-dependent carboxylase biotinylation in planta. The polypeptide is Biotin--protein ligase 2 (HCS2) (Arabidopsis thaliana (Mouse-ear cress)).